The primary structure comprises 98 residues: Large ribosomal subunit protein bL25 (98 aa).

It belongs to the bacterial ribosomal protein bL25 family. Part of the 50S ribosomal subunit; part of the 5S rRNA/L5/L18/L25 subcomplex. Contacts the 5S rRNA. Binds to the 5S rRNA independently of L5 and L18.

Its function is as follows. This is one of the proteins that binds to the 5S RNA in the ribosome where it forms part of the central protuberance. The sequence is that of Large ribosomal subunit protein bL25 from Synechocystis sp. (strain ATCC 27184 / PCC 6803 / Kazusa).